The chain runs to 122 residues: Large ribosomal subunit protein bL12 (122 aa).

The protein belongs to the bacterial ribosomal protein bL12 family. Homodimer. Part of the ribosomal stalk of the 50S ribosomal subunit. Forms a multimeric L10(L12)X complex, where L10 forms an elongated spine to which 2 to 4 L12 dimers bind in a sequential fashion. Binds GTP-bound translation factors.

Its function is as follows. Forms part of the ribosomal stalk which helps the ribosome interact with GTP-bound translation factors. Is thus essential for accurate translation. This is Large ribosomal subunit protein bL12 from Mycoplasma mycoides subsp. mycoides SC (strain CCUG 32753 / NCTC 10114 / PG1).